The primary structure comprises 308 residues: Transcriptional adapter 1-2 (308 aa).

It belongs to the TADA1 family. In terms of assembly, component of the Spt-Ada-Gcn5 acetyltransferase (SAGA) complex consisting of wda/Taf5L, Saf6, Taf9, Taf10b, Taf12, Ada1, Spt3, Spt7, Spt20, Sf3b3, Sf3b5, Nipped-A/Tra1, a histone acetyltransferase (HAT) module made up of Gcn5, Ada2b (Isoform B), Ada3 and Sgf29, and a deubiquitinase (DUB) module made up of not/nonstop, Sgf11 and e(y)2 tethered to SAGA by Atxn7. Not a component of the Ada2a-containing ATAC complex.

It is found in the nucleus. Functionally, component of the transcription regulatory complex SAGA, a multiprotein complex that activates transcription by remodeling chromatin and mediating histone acetylation and deubiquitination. The SAGA complex predominantly acetylates histone H3. The sequence is that of Transcriptional adapter 1-2 from Drosophila melanogaster (Fruit fly).